Here is a 152-residue protein sequence, read N- to C-terminus: UPF0266 membrane protein YobD (152 aa).

3 consecutive transmembrane segments (helical) span residues 6–26 (LVLILFIAVLLAFAIYDQFIM), 45–65 (IDSVIFVGLIVILIYNSVTNH), and 67–87 (ALITTWLLSALALMGFYIFWI).

It belongs to the UPF0266 family.

It is found in the cell inner membrane. The protein is UPF0266 membrane protein YobD of Escherichia coli O127:H6 (strain E2348/69 / EPEC).